A 613-amino-acid chain; its full sequence is Thymidine kinase (613 aa).

2 disordered regions span residues M1 to S233 and S253 to R276. The segment covering F8–A18 has biased composition (low complexity). Over residues P78–K88 the composition is skewed to basic and acidic residues. Positions L114–D126 are enriched in basic residues. Positions H199–G218 are enriched in basic and acidic residues. G301–T308 contributes to the ATP binding site. E327 (proton acceptor) is an active-site residue. Substrate contacts are provided by Y344, Q365, and R461.

This sequence belongs to the herpesviridae thymidine kinase family. In terms of assembly, homodimer.

The catalysed reaction is thymidine + ATP = dTMP + ADP + H(+). Its function is as follows. Catalyzes the transfer of the gamma-phospho group of ATP to thymidine to generate dTMP in the salvage pathway of pyrimidine synthesis. The dTMP serves as a substrate for DNA polymerase during viral DNA replication. Allows the virus to be reactivated and to grow in non-proliferative cells lacking a high concentration of phosphorylated nucleic acid precursors. This chain is Thymidine kinase, found in Equine herpesvirus 2 (strain 86/87) (EHV-2).